The sequence spans 224 residues: 7-cyano-7-deazaguanine synthase (224 aa).

12-22 (LSGGLDSSTVT) is a binding site for ATP. The Zn(2+) site is built by Cys193, Cys201, Cys204, and Cys207.

This sequence belongs to the QueC family. It depends on Zn(2+) as a cofactor.

It catalyses the reaction 7-carboxy-7-deazaguanine + NH4(+) + ATP = 7-cyano-7-deazaguanine + ADP + phosphate + H2O + H(+). It participates in purine metabolism; 7-cyano-7-deazaguanine biosynthesis. Catalyzes the ATP-dependent conversion of 7-carboxy-7-deazaguanine (CDG) to 7-cyano-7-deazaguanine (preQ(0)). This chain is 7-cyano-7-deazaguanine synthase, found in Prochlorococcus marinus (strain MIT 9301).